The chain runs to 65 residues: MGKNKDVRITITLECTNCPQNKLKRYPGISRYTTQKNRRNTPNRLELKKFCPHCSLHTLHKEIKK.

This sequence belongs to the bacterial ribosomal protein bL33 family.

Its subcellular location is the plastid. The protein resides in the chloroplast. The protein is Large ribosomal subunit protein bL33c of Staurastrum punctulatum (Green alga).